The chain runs to 155 residues: Protein-export protein SecB (155 aa).

The protein belongs to the SecB family. In terms of assembly, homotetramer, a dimer of dimers. One homotetramer interacts with 1 SecA dimer.

The protein resides in the cytoplasm. Its function is as follows. One of the proteins required for the normal export of preproteins out of the cell cytoplasm. It is a molecular chaperone that binds to a subset of precursor proteins, maintaining them in a translocation-competent state. It also specifically binds to its receptor SecA. This is Protein-export protein SecB from Vibrio atlanticus (strain LGP32) (Vibrio splendidus (strain Mel32)).